Consider the following 202-residue polypeptide: Remorin 1.4 (202 aa).

Over residues 1-10 (MAEEEPKKVT) the composition is skewed to basic and acidic residues. The segment at 1-79 (MAEEEPKKVT…VEEEKKEGSV (79 aa)) is disordered. Low complexity predominate over residues 25–39 (EKPAAAADVAPQEKP). The segment covering 40–50 (VAPPPVLPSPA) has biased composition (pro residues). A compositionally biased stretch (basic and acidic residues) spans 68–79 (KEVEEEKKEGSV). Positions 123 to 169 (ENNKKAAVEAELKKMEEQLEKKKAEYVEQMKNKIAQIHKEAEEKRAM) form a coiled coil.

It belongs to the remorin family.

This is Remorin 1.4 from Arabidopsis thaliana (Mouse-ear cress).